The primary structure comprises 224 residues: UPF0319 protein VC_1853 (224 aa).

The N-terminal stretch at 1 to 21 (MKLNPLILGLLLSFSAGHSLA) is a signal peptide.

It belongs to the UPF0319 family.

The sequence is that of UPF0319 protein VC_1853 from Vibrio cholerae serotype O1 (strain ATCC 39315 / El Tor Inaba N16961).